Consider the following 349-residue polypeptide: Cell adhesion molecule CEACAM8 (349 aa).

A signal peptide spans 1-34 (MGPISAPSCRWRIPWQGLLLTASLFTFWNPPTTA). In terms of domain architecture, Ig-like V-type spans 35-142 (QLTIEAVPSN…EVTGQFSVHP (108 aa)). N-linked (GlcNAc...) asparagine glycosylation is found at Asn104, Asn111, Asn115, Asn152, Asn173, Asn197, Asn224, Asn256, Asn274, Asn288, and Asn309. 2 consecutive Ig-like C2-type domains span residues 145–232 (PKPS…VTLN) and 237–319 (PDAP…ITVS). Cys167 and Cys215 are disulfide-bonded. The cysteines at positions 259 and 299 are disulfide-linked. Asp320 carries the GPI-anchor amidated aspartate lipid modification. The propeptide at 321 to 349 (ALVQGSSPGLSARATVSIMIGVLARVALI) is removed in mature form.

Belongs to the immunoglobulin superfamily. CEA family. As to quaternary structure, monomer. Heterodimer with CEACAM6; heterodimerizes via its Ig-like V-type domain. Glycosylated. Expressed in leukocytes of chronic myeloid Leukemia patients and bone marrow.

The protein resides in the cell membrane. Its subcellular location is the cell surface. In terms of biological role, cell surface glycoprotein that plays a role in cell adhesion in a calcium-independent manner. Mediates heterophilic cell adhesion with other carcinoembryonic antigen-related cell adhesion molecules, such as CEACAM6. Heterophilic interaction with CEACAM8 occurs in activated neutrophils. The sequence is that of Cell adhesion molecule CEACAM8 from Homo sapiens (Human).